The following is a 376-amino-acid chain: Glucose-1-phosphate adenylyltransferase (376 aa).

Alpha-D-glucose 1-phosphate is bound by residues Y101, G166, 181–182 (EK), and S192.

It belongs to the bacterial/plant glucose-1-phosphate adenylyltransferase family. In terms of assembly, homotetramer.

It catalyses the reaction alpha-D-glucose 1-phosphate + ATP + H(+) = ADP-alpha-D-glucose + diphosphate. It functions in the pathway glycan biosynthesis; glycogen biosynthesis. Functionally, involved in the biosynthesis of ADP-glucose, a building block required for the elongation reactions to produce glycogen. Catalyzes the reaction between ATP and alpha-D-glucose 1-phosphate (G1P) to produce pyrophosphate and ADP-Glc. The polypeptide is Glucose-1-phosphate adenylyltransferase (Bacillus cereus (strain ATCC 10987 / NRS 248)).